A 1055-amino-acid chain; its full sequence is cAMP and cAMP-inhibited cGMP 3',5'-cyclic phosphodiesterase 10A (1055 aa).

3 disordered regions span residues 1–90 (MASL…RGGG), 151–193 (AAAA…GRRR), and 205–250 (LPAR…RPQG). Composition is skewed to gly residues over residues 79–90 (GGPGALSARGGG) and 154–168 (AGGG…GGGQ). Residues 220-231 (PLGQAARRAGSP) are compositionally biased toward low complexity. Gly residues predominate over residues 232–243 (GFPGAGPGGGGQ). Phosphothreonine is present on T282. 2 GAF domains span residues 367–510 (DNQL…SVAI) and 542–688 (AIDS…ALAL). 3',5'-cyclic AMP contacts are provided by residues 562-563 (RC), 606-607 (IA), T640, Q659, and H791. Residues 718-1035 (TSEEWQGLMQ…SQWEKVIRGE (318 aa)) form the PDEase domain. The active-site Proton donor is the H791. Residue H791 coordinates 3',5'-cyclic GMP. H795, H829, D830, and D940 together coordinate a divalent metal cation. Residue Q992 coordinates 3',5'-cyclic AMP. Q992 contributes to the 3',5'-cyclic GMP binding site.

The protein belongs to the cyclic nucleotide phosphodiesterase family. In terms of assembly, homodimer. It depends on a divalent metal cation as a cofactor. Phosphorylated on Thr-16. Abundant in the putamen and caudate nucleus regions of brain and testis, moderately expressed in the thyroid gland, pituitary gland, thalamus and cerebellum.

Its subcellular location is the cytoplasm. The protein localises to the cytosol. The enzyme catalyses a nucleoside 3',5'-cyclic phosphate + H2O = a nucleoside 5'-phosphate + H(+). It catalyses the reaction 3',5'-cyclic AMP + H2O = AMP + H(+). It carries out the reaction 3',5'-cyclic GMP + H2O = GMP + H(+). Its pathway is purine metabolism; 3',5'-cyclic AMP degradation; AMP from 3',5'-cyclic AMP: step 1/1. It functions in the pathway purine metabolism; 3',5'-cyclic GMP degradation; GMP from 3',5'-cyclic GMP: step 1/1. Its activity is regulated as follows. Inhibited by dipyridamole and moderately by IBMX. cGMP acts as an allosteric activator. Its function is as follows. Plays a role in signal transduction by regulating the intracellular concentration of cyclic nucleotides. Can hydrolyze both cAMP and cGMP, but has higher affinity for cAMP and is more efficient with cAMP as substrate. May play a critical role in regulating cAMP and cGMP levels in the striatum, a region of the brain that contributes to the control of movement and cognition. This chain is cAMP and cAMP-inhibited cGMP 3',5'-cyclic phosphodiesterase 10A (PDE10A), found in Homo sapiens (Human).